Reading from the N-terminus, the 93-residue chain is CRISPR-associated endoribonuclease Cas2 1 (93 aa).

Asp-8 serves as a coordination point for Mg(2+).

It belongs to the CRISPR-associated endoribonuclease Cas2 protein family. As to quaternary structure, homodimer, forms a heterotetramer with a Cas1 homodimer. Mg(2+) is required as a cofactor.

CRISPR (clustered regularly interspaced short palindromic repeat), is an adaptive immune system that provides protection against mobile genetic elements (viruses, transposable elements and conjugative plasmids). CRISPR clusters contain sequences complementary to antecedent mobile elements and target invading nucleic acids. CRISPR clusters are transcribed and processed into CRISPR RNA (crRNA). Functions as a ssRNA-specific endoribonuclease. Involved in the integration of spacer DNA into the CRISPR cassette. This chain is CRISPR-associated endoribonuclease Cas2 1, found in Chloroflexus aurantiacus (strain ATCC 29366 / DSM 635 / J-10-fl).